Here is a 146-residue protein sequence, read N- to C-terminus: Hemoglobin subunit beta (146 aa).

Residue V1 is modified to N-acetylvaline. The Globin domain occupies 2–146; the sequence is HLTDAEKAAI…VATALGHKYH (145 aa). Position 59 is an N6-acetyllysine (K59). H63 provides a ligand contact to heme b. The residue at position 82 (K82) is an N6-acetyllysine. H92 lines the heme b pocket. An S-nitrosocysteine modification is found at C93. K144 carries the N6-acetyllysine modification.

This sequence belongs to the globin family. As to quaternary structure, heterotetramer of two alpha chains and two beta chains. In terms of tissue distribution, red blood cells.

Its function is as follows. Involved in oxygen transport from the lung to the various peripheral tissues. This Ondatra zibethicus (Muskrat) protein is Hemoglobin subunit beta (HBB).